A 359-amino-acid chain; its full sequence is Lipopolysaccharide 1,6-galactosyltransferase (359 aa).

Residues Gln242 and Glu274 each coordinate UDP.

The protein belongs to the glycosyltransferase group 1 family. Glycosyltransferase 4 subfamily.

It carries out the reaction alpha-D-Glc-(1-&gt;3)-[L-alpha-D-Hep-(1-&gt;7)]-4-O-PO3(2-)-L-alpha-D-Hep-(1-&gt;3)-4-O-PO3(2-)-L-alpha-D-Hep-(1-&gt;5)-[alpha-Kdo-(2-&gt;4)]-alpha-Kdo-(2-&gt;6)-lipid A + UDP-alpha-D-galactose = alpha-D-Gal-(1-&gt;6)-alpha-D-Glc-(1-&gt;3)-[L-alpha-D-Hep-(1-&gt;7)]-4-O-PO3(2-)-L-alpha-D-Hep-(1-&gt;3)-4-O-PO3(2-)-L-alpha-D-Hep-(1-&gt;5)-[alpha-Kdo-(2-&gt;4)]-alpha-Kdo-(2-&gt;6)-lipid A + UDP + H(+). The protein operates within bacterial outer membrane biogenesis; LPS core biosynthesis. Functionally, galactosyltransferase involved in the biosynthesis of the core oligosaccharide region of lipopolysaccharide (LPS). Catalyzes the addition of galactose from UDP-galactose to the first glucose residue of the LPS outer core. Cannot use other sugar donors, such as UDP-glucose, UDP-glucuronic acid, UDP-galacuronic acid, GDP-mannose, ADP-glucose and GDP-glucose. In the absence of a lipid acceptor, can hydrolyze UDP-galactose to UDP and galactose. This Escherichia coli (strain K12) protein is Lipopolysaccharide 1,6-galactosyltransferase.